Consider the following 255-residue polypeptide: NAD kinase (255 aa).

Residue aspartate 44 is the Proton acceptor of the active site. NAD(+)-binding positions include 44 to 45, 114 to 115, aspartate 144, alanine 152, and 155 to 160; these read DG, NE, and TAYNLS.

Belongs to the NAD kinase family. Requires a divalent metal cation as cofactor.

Its subcellular location is the cytoplasm. The catalysed reaction is NAD(+) + ATP = ADP + NADP(+) + H(+). Its function is as follows. Involved in the regulation of the intracellular balance of NAD and NADP, and is a key enzyme in the biosynthesis of NADP. Catalyzes specifically the phosphorylation on 2'-hydroxyl of the adenosine moiety of NAD to yield NADP. The protein is NAD kinase of Hyphomonas neptunium (strain ATCC 15444).